A 391-amino-acid polypeptide reads, in one-letter code: Coiled-coil domain-containing protein 85C-A (391 aa).

2 coiled-coil regions span residues 23–87 (KCSK…ELCC) and 121–146 (FQQK…KEII). Residues 154–212 (NGAGSRSSIDSQSSLSNLNGGSATVRDVGDGSSTSSTGSAGSPDHHHSHIHKPTEGKIT) are disordered. 2 stretches are compositionally biased toward low complexity: residues 158–175 (SRSS…NGGS) and 183–195 (DGSS…SAGS).

Belongs to the CCDC85 family.

The protein resides in the cell junction. The protein localises to the tight junction. Its subcellular location is the adherens junction. May play a role in cell-cell adhesion and epithelium development through its interaction with proteins of the beta-catenin family. May play an important role in cortical development, especially in the maintenance of radial glia. The protein is Coiled-coil domain-containing protein 85C-A (ccdc85ca) of Danio rerio (Zebrafish).